The following is a 355-amino-acid chain: Gentisate 1,2-dioxygenase (355 aa).

A Cupin type-2 domain is found at methionine 106 to valine 174.

Belongs to the gentisate 1,2-dioxygenase family.

It catalyses the reaction 2,5-dihydroxybenzoate + O2 = 3-maleylpyruvate + H(+). The protein operates within aromatic compound metabolism; naphthalene degradation. Its function is as follows. Catalyzes the oxygen-dependent ring fission of gentisate between the carboxyl and proximal hydroxyl groups at positions 1 and 2 of the aromatic ring to form maleylpyruvate. Can also catalyze oxidation of alkyl- and halogenated gentisates. Exhibits higher affinity for 3-substituted gentisates than for gentisate but has higher activity with gentisate. This is Gentisate 1,2-dioxygenase from Ralstonia sp.